We begin with the raw amino-acid sequence, 263 residues long: Oxygen-evolving enhancer protein 2-1, chloroplastic (263 aa).

Serine 153 bears the Phosphoserine mark.

Belongs to the PsbP family. Interacts with WAK1.

Its subcellular location is the plastid. The protein localises to the chloroplast thylakoid lumen. In terms of biological role, may be involved in the regulation of photosystem II. In Arabidopsis thaliana (Mouse-ear cress), this protein is Oxygen-evolving enhancer protein 2-1, chloroplastic (PSBP1).